We begin with the raw amino-acid sequence, 529 residues long: DNA-binding protein (529 aa).

Residues 1 to 17 (MASREEEQRETTPERGR) are compositionally biased toward basic and acidic residues. Disordered regions lie at residues 1–108 (MASR…VDSE) and 125–168 (PVLI…SEST). The segment covering 129 to 139 (KHGKGGKRTVR) has biased composition (basic residues). The span at 140 to 155 (RLNEDDPVARGMRTQE) shows a compositional bias: basic and acidic residues. The segment covering 156 to 165 (EKEESSEAES) has biased composition (acidic residues). A Phosphotyrosine; by host modification is found at Tyr195. Residues Cys284 and His286 each coordinate Zn(2+). The segment at 297–331 (IEMDVTSENGQRALKEQSSKAKIVKNRWGRNVVQI) is flexible loop. Cys339, Cys355, Cys396, Cys398, Cys450, and Cys467 together coordinate Zn(2+). The C-terminal arm, DBP binding stretch occupies residues 513-529 (VSLPVAHSDARQNPFDF).

This sequence belongs to the adenoviridae E2A DNA-binding protein family. Homomultimerizes on viral ssDNA bound to pTP. Forms an initiation complex with viral polymerase, pTP and hosts NFIA and POU2F1/OCT1. Interacts with host SRCAP.

Its subcellular location is the host nucleus. Functionally, plays a role in the elongation phase of viral strand displacement replication by unwinding the template in an ATP-independent fashion, employing its capacity to form multimers. Also enhances the rate of initiation. Released from template upon second strand synthesis. Assembles in complex with viral pTP, viral pol, host NFIA and host POU2F1/OCT1 on viral origin of replication. Covers the whole ssDNA genome during synthesis. The complementary strand synthesis induces its release from DNA template. May inhibit cellular transcription mediated by the interaction between host SRCAP and CBP. The protein is DNA-binding protein of Human adenovirus C serotype 2 (HAdV-2).